A 477-amino-acid chain; its full sequence is Glycogen synthase (477 aa).

An ADP-alpha-D-glucose-binding site is contributed by Lys15.

Belongs to the glycosyltransferase 1 family. Bacterial/plant glycogen synthase subfamily.

It catalyses the reaction [(1-&gt;4)-alpha-D-glucosyl](n) + ADP-alpha-D-glucose = [(1-&gt;4)-alpha-D-glucosyl](n+1) + ADP + H(+). It participates in glycan biosynthesis; glycogen biosynthesis. Its function is as follows. Synthesizes alpha-1,4-glucan chains using ADP-glucose. The chain is Glycogen synthase from Klebsiella pneumoniae subsp. pneumoniae (strain ATCC 700721 / MGH 78578).